We begin with the raw amino-acid sequence, 493 residues long: (+)-menthofuran synthase (493 aa).

Methionine 1 is a topological domain (cytoplasmic). The chain crosses the membrane as a helical; Signal-anchor for type II membrane protein span at residues 2–19; that stretch reads AALLVFFSVSLILLAVLF. Topologically, residues 20–493 are lumenal; that stretch reads HKRKSSLSSR…LLVLATPRQS (474 aa). Asparagine 169 is a glycosylation site (N-linked (GlcNAc...) asparagine). Position 434 (cysteine 434) interacts with heme.

It belongs to the cytochrome P450 family. Heme is required as a cofactor.

The protein resides in the membrane. The catalysed reaction is (R)-pulegone + reduced [NADPH--hemoprotein reductase] + O2 = (R)-menthofuran + oxidized [NADPH--hemoprotein reductase] + 2 H2O + H(+). It participates in secondary metabolite biosynthesis; terpenoid biosynthesis. In terms of biological role, monoterpene synthase that catalyzes the formation of (+)-menthofuran from (+)-pulegone. The polypeptide is (+)-menthofuran synthase (Mentha piperita (Peppermint)).